The sequence spans 951 residues: AP-1 complex subunit beta-1 (951 aa).

Lys-318 carries the N6-acetyllysine modification. 3'-nitrotyrosine is present on Tyr-574.

It belongs to the adaptor complexes large subunit family. Adaptor protein complex 1 (AP-1) is a heterotetramer composed of two large adaptins (gamma-type subunit AP1G1 and beta-type subunit AP1B1), a medium adaptin (mu-type subunit AP1M1 or AP1M2) and a small adaptin (sigma-type subunit AP1S1 or AP1S2 or AP1S3).

The protein localises to the cytoplasmic vesicle. Its subcellular location is the clathrin-coated vesicle membrane. The protein resides in the golgi apparatus. In terms of biological role, subunit of clathrin-associated adaptor protein complex 1 that plays a role in protein sorting in the late-Golgi/trans-Golgi network (TGN) and/or endosomes. The AP complexes mediate both the recruitment of clathrin to membranes and the recognition of sorting signals within the cytosolic tails of transmembrane cargo molecules. The sequence is that of AP-1 complex subunit beta-1 (AP2B1) from Bos taurus (Bovine).